A 308-amino-acid polypeptide reads, in one-letter code: CASP-like protein 4A2 (308 aa).

Residues 1–135 form a disordered region; sequence MALEAQPSPS…APAPAPRVPA (135 aa). The Cytoplasmic segment spans residues 1–161; the sequence is MALEAQPSPS…KRPTAVLQRT (161 aa). Over residues 22-31 the composition is skewed to gly residues; the sequence is GGAGAPGGSA. A compositionally biased stretch (low complexity) spans 32–44; it reads GDADAQARRATSG. Pro residues-rich tracts occupy residues 54–65 and 89–132; these read RRSPPPPFPRTP and FQPP…PAPR. Residues 162 to 182 form a helical membrane-spanning segment; it reads ALVARVAAALLCLAALAVLAA. The Extracellular portion of the chain corresponds to 183–203; it reads DSRKGFALDSYSNYSQLRYSE. The N-linked (GlcNAc...) asparagine glycan is linked to asparagine 195. A helical membrane pass occupies residues 204-224; that stretch reads AVNVIGFVYSVLQFFVLADLM. At 225 to 240 the chain is on the cytoplasmic side; sequence RRNKHLNPRRKGDYFD. The chain crosses the membrane as a helical span at residues 241–262; it reads FFMDQVLAYLLISSSSSATARV. The Extracellular segment spans residues 263-280; it reads GDWIDNWGSDPFPKMANS. Residue asparagine 279 is glycosylated (N-linked (GlcNAc...) asparagine). Residues 281–301 form a helical membrane-spanning segment; it reads SIAISFMAFLVFAISALISAY. Over 302–308 the chain is Cytoplasmic; the sequence is NLFRRDI.

It belongs to the Casparian strip membrane proteins (CASP) family. As to quaternary structure, homodimer and heterodimers.

The protein resides in the cell membrane. The protein is CASP-like protein 4A2 of Oryza sativa subsp. japonica (Rice).